We begin with the raw amino-acid sequence, 543 residues long: Formin-binding protein 1-like (543 aa).

An F-BAR domain is found at 1–263 (MSWGTELWDQ…AAKSVDERRD (263 aa)). Coiled coils occupy residues 66-258 (FTSC…AKSV) and 334-426 (LEDF…QRSE). Residues 339–416 (HLPPEQRRKR…IHKNEGWLSE (78 aa)) enclose the REM-1 domain. Residues 424–467 (RSERRHSAEANHLVAQGRESPEGSYTEDANQEGRVQPQHHAHPE) are disordered. The region spanning 479-540 (PAIGHCKSLY…PTSYIEITLE (62 aa)) is the SH3 domain.

The protein belongs to the FNBP1 family. As to quaternary structure, homodimerizes, the dimers can polymerize end-to-end to form filamentous structures. Interacts with GTP-bound cdc42 and wasl/n-wasp.

Its subcellular location is the cytoplasm. The protein localises to the cytoskeleton. It is found in the cell cortex. The protein resides in the cytoplasmic vesicle. It localises to the cell membrane. In terms of biological role, required to coordinate membrane tubulation with reorganization of the actin cytoskeleton during endocytosis. Essential for autophagy of intracellular bacterial pathogens. Promotes cdc42-induced actin polymerization by activating the wasl-waspip complex, the predominant form of wasl/n-wasp in cells. The polypeptide is Formin-binding protein 1-like (fnbp1l) (Xenopus laevis (African clawed frog)).